The following is a 252-amino-acid chain: Short-chain dehydrogenase/reductase eriH (252 aa).

NADP(+)-binding residues include isoleucine 16, aspartate 65, asparagine 92, lysine 125, tyrosine 158, lysine 162, valine 191, and threonine 193. Residue tyrosine 158 is the Proton acceptor of the active site. Tyrosine 158 acts as the Proton donor in catalysis. Residue lysine 162 is the Lowers pKa of active site Tyr of the active site.

This sequence belongs to the short-chain dehydrogenases/reductases (SDR) family.

It carries out the reaction cyathadiol + reduced [NADPH--hemoprotein reductase] + O2 = cyathatriol + oxidized [NADPH--hemoprotein reductase] + H2O + H(+). The enzyme catalyses 11-O-acetylcyathatriol + A = 11-O-acetylcyathin A3 + AH2. It catalyses the reaction cyathatriol + A = cyathin A3 + AH2. Its pathway is secondary metabolite biosynthesis. Its function is as follows. Short-chain dehydrogenase/reductase; part of the gene cluster that mediates the biosynthesis of erinacines, cyathane-xylosides that show unique biological activities, including leishmanicidal activity, stimulating activity for nerve growth-factor synthesis, and agonistic activity toward the kappa opioid receptor. Within the pathway, eriH works with eriA to catalyze C-11 hydroxylation of cyathadiol to produce cyathatriol. EriH also catalyzes oxidation of 11-O-acetyl-cyathatriol into 1-O-acetylcyathin A3. In the absence of eriL and eriJ, the SDR eriH is able to convert cyathatriol to cyathin A3; this is likely a switching mechanism in the biosynthesis of cyathins (C-14 ketogroup)and erinacines (C-14 glycosylated group). The first step of the erinacines biosynthesis pathway is catalyzed by the geranylgeranyl diphosphate (GGPP) synthase eriE via conversion of farnesyl pyrophosphate and isopentyl pyrophosphate into geranylgeranyl pyrophosphate (GGPP). GGPP is then substrate of the diterpene cyclase eriG for the production of cyatha-3,12-diene. The cytochrome P450 monooxygenase eriI then hydroxylates cyatha-3,12-diene at C-14 of the seven-membered ring to produce erinacol, which is further hydroxylated at C-15 by the cytochrome P450 monooxygenase eriC to yield cyathadiol. The cytochrome P450 monooxygenase eriA then catalyzes C-11 hydroxylation in the presence of the short chain dehydrogenase/reductase (SDR) eriH, which leads to the production of cyathatriol. The acetyltransferase eriL converts cyathatriol into 11-O-acetyl-cyathatriol. The SDR eriH catalyzes further oxidation of 11-O-acetyl-cyathatriol into 1-O-acetylcyathin A3. Finally, the glycosyl transferase eriJ tranfers xylose from UDP-xylose onto C-14 of 11-O-acetyl-cyathatriol to form eracine Q. EriJ is also able to convert 11-O-acetyl-cyathatriol to eracine Q2 by using UDP-D-glucose as cosubstrate, but at a lower rate. The sequence is that of Short-chain dehydrogenase/reductase eriH from Hericium erinaceus (Lion's mane mushroom).